The chain runs to 157 residues: Crossover junction endodeoxyribonuclease RuvC (157 aa).

Residues D7, E67, and D140 contribute to the active site. Mg(2+)-binding residues include D7, E67, and D140.

It belongs to the RuvC family. As to quaternary structure, homodimer which binds Holliday junction (HJ) DNA. The HJ becomes 2-fold symmetrical on binding to RuvC with unstacked arms; it has a different conformation from HJ DNA in complex with RuvA. In the full resolvosome a probable DNA-RuvA(4)-RuvB(12)-RuvC(2) complex forms which resolves the HJ. It depends on Mg(2+) as a cofactor.

The protein resides in the cytoplasm. The enzyme catalyses Endonucleolytic cleavage at a junction such as a reciprocal single-stranded crossover between two homologous DNA duplexes (Holliday junction).. In terms of biological role, the RuvA-RuvB-RuvC complex processes Holliday junction (HJ) DNA during genetic recombination and DNA repair. Endonuclease that resolves HJ intermediates. Cleaves cruciform DNA by making single-stranded nicks across the HJ at symmetrical positions within the homologous arms, yielding a 5'-phosphate and a 3'-hydroxyl group; requires a central core of homology in the junction. The consensus cleavage sequence is 5'-(A/T)TT(C/G)-3'. Cleavage occurs on the 3'-side of the TT dinucleotide at the point of strand exchange. HJ branch migration catalyzed by RuvA-RuvB allows RuvC to scan DNA until it finds its consensus sequence, where it cleaves and resolves the cruciform DNA. The sequence is that of Crossover junction endodeoxyribonuclease RuvC from Rickettsia bellii (strain OSU 85-389).